A 274-amino-acid polypeptide reads, in one-letter code: NAD kinase (274 aa).

Asp59 functions as the Proton acceptor in the catalytic mechanism. Residues 59–60 (DG), Lys64, 128–129 (ND), Asp158, 169–174 (TAYALS), and Ala193 contribute to the NAD(+) site.

The protein belongs to the NAD kinase family. Requires a divalent metal cation as cofactor.

It localises to the cytoplasm. The enzyme catalyses NAD(+) + ATP = ADP + NADP(+) + H(+). Involved in the regulation of the intracellular balance of NAD and NADP, and is a key enzyme in the biosynthesis of NADP. Catalyzes specifically the phosphorylation on 2'-hydroxyl of the adenosine moiety of NAD to yield NADP. This is NAD kinase from Petrotoga mobilis (strain DSM 10674 / SJ95).